A 99-amino-acid chain; its full sequence is SAGA-associated factor 11 (99 aa).

The segment at 71–92 adopts an SGF11-type zinc-finger fold; it reads IHCENCGRDVSANRLAAHLQRC.

It belongs to the SGF11 family. Component of the 1.8 MDa SAGA transcription coactivator-HAT complex. SAGA is built of 5 distinct domains with specialized functions. Within the SAGA complex, SUS1, SGF11, SGF73 and UBP8 form an additional subcomplex of SAGA called the DUB module (deubiquitination module). Interacts directly with SGF73, SUS1 and UBP8.

It is found in the nucleus. Functions as a component of the transcription regulatory histone acetylation (HAT) complex SAGA. At the promoters, SAGA is required for recruitment of the basal transcription machinery. It influences RNA polymerase II transcriptional activity through different activities such as TBP interaction and promoter selectivity, interaction with transcription activators, and chromatin modification through histone acetylation and deubiquitination. SAGA acetylates nucleosomal histone H3 to some extent (to form H3K9ac, H3K14ac, H3K18ac and H3K23ac). SAGA interacts with DNA via upstream activating sequences (UASs). Involved in transcriptional regulation of a subset of SAGA-regulated genes. Within the SAGA complex, participates in a subcomplex, that specifically deubiquitinates histones H2B. This chain is SAGA-associated factor 11, found in Saccharomyces cerevisiae (strain YJM789) (Baker's yeast).